Here is a 160-residue protein sequence, read N- to C-terminus: Transcription elongation factor GreA (160 aa).

Residues 49 to 75 adopt a coiled-coil conformation; sequence SEYDEAKNDQAFTEGKILQLENKLKNA.

The protein belongs to the GreA/GreB family.

Its function is as follows. Necessary for efficient RNA polymerase transcription elongation past template-encoded arresting sites. The arresting sites in DNA have the property of trapping a certain fraction of elongating RNA polymerases that pass through, resulting in locked ternary complexes. Cleavage of the nascent transcript by cleavage factors such as GreA or GreB allows the resumption of elongation from the new 3'terminus. GreA releases sequences of 2 to 3 nucleotides. This Clostridium botulinum (strain Alaska E43 / Type E3) protein is Transcription elongation factor GreA.